The chain runs to 125 residues: MRPLDAVELAEPEEVEVLEPEEDFEQFLLPVIHEMREDIASLTRERGRAPARNRGKLWEMDNMLIQIKTQVEASEESALNHLQGAGGAEPRGPRAEKADEKAQEMAKMAEMLVQLVRRIEKSESS.

The segment at 76 to 99 (ESALNHLQGAGGAEPRGPRAEKAD) is disordered. Positions 94–124 (RAEKADEKAQEMAKMAEMLVQLVRRIEKSES) form a coiled coil.

Belongs to the MORF4 family-associated protein family. As to quaternary structure, found in a complex composed of MORF4L1, MRFAP1 and RB1. Interacts via its N-terminus with MORF4L1. Interacts with CSTB and MORF4L2. As to expression, widely expressed in all tissues examined and as early as 7 days during embryonic development.

It localises to the nucleus. The protein localises to the cytoplasm. The protein resides in the perinuclear region. This Mus musculus (Mouse) protein is MORF4 family-associated protein 1.